A 137-amino-acid polypeptide reads, in one-letter code: Nucleoside diphosphate kinase (137 aa).

Residues lysine 9, phenylalanine 57, arginine 85, threonine 91, arginine 102, and asparagine 112 each coordinate ATP. Residue histidine 115 is the Pros-phosphohistidine intermediate of the active site.

Belongs to the NDK family. As to quaternary structure, homotetramer. It depends on Mg(2+) as a cofactor.

The protein resides in the cytoplasm. The enzyme catalyses a 2'-deoxyribonucleoside 5'-diphosphate + ATP = a 2'-deoxyribonucleoside 5'-triphosphate + ADP. It carries out the reaction a ribonucleoside 5'-diphosphate + ATP = a ribonucleoside 5'-triphosphate + ADP. Major role in the synthesis of nucleoside triphosphates other than ATP. The ATP gamma phosphate is transferred to the NDP beta phosphate via a ping-pong mechanism, using a phosphorylated active-site intermediate. This is Nucleoside diphosphate kinase from Geobacter sp. (strain M21).